Reading from the N-terminus, the 604-residue chain is Phenylalanine--tRNA ligase beta subunit (604 aa).

Positions 327–402 constitute a B5 domain; that stretch reads YFQEKREVAH…LGRTLDRFSP (76 aa). Mg(2+) is bound by residues Asp-380, Asp-386, Glu-389, and Glu-390.

Belongs to the phenylalanyl-tRNA synthetase beta subunit family. Type 2 subfamily. As to quaternary structure, tetramer of two alpha and two beta subunits. The cofactor is Mg(2+).

It is found in the cytoplasm. The enzyme catalyses tRNA(Phe) + L-phenylalanine + ATP = L-phenylalanyl-tRNA(Phe) + AMP + diphosphate + H(+). The polypeptide is Phenylalanine--tRNA ligase beta subunit (Treponema pallidum subsp. pallidum (strain SS14)).